The chain runs to 988 residues: Putative disease resistance protein RGA4 (988 aa).

Residues 137–439 enclose the NB-ARC domain; that stretch reads AAAATRETGF…MAHGFLLSKG (303 aa). Residue 184-191 participates in ATP binding; the sequence is GMGGLGKT. LRR repeat units lie at residues 526–548, 549–572, 574–595, 596–620, 638–662, 674–696, 751–776, 784–808, 829–851, 852–876, 878–900, 901–925, 927–950, and 966–988; these read FVSLRVLNLSYSKLEQLPSSIGD, LLHLRYLDLSCNNFRSLPERLCKL, NLQTLDVHNCYSLNCLPKQTSK, LSSLRHLVVDGCPLTSTPPRIGLLT, LGELKNLNLCGSISITHLERVKNDT, LQSLSMSWDNDGPNRYESKEVKV, LPCLENLELQNGSAEVEYVEEDDVHS, FPSLKKLRIWFFRSLKGLMKEEGEE, LSSVKKLEVHGNTNTRGLSSISN, LSTLTSLRIGANYRATSLPEEMFTS, TNLEFLSFFDFKNLKDLPTSLTS, LNALKRLQIESCDSLESFPEQGLEG, TSLTQLFVKYCKMLKCLPEGLQHL, and KRCDKEIGEDWHKIAHIPNLDIH.

Belongs to the disease resistance NB-LRR family.

In terms of biological role, disease resistance protein. Resistance proteins guard the plant against pathogens that contain an appropriate avirulence protein via a direct or indirect interaction with this avirulence protein. That triggers a defense system which restricts the pathogen growth. This Solanum bulbocastanum (Wild potato) protein is Putative disease resistance protein RGA4 (RGA4).